Reading from the N-terminus, the 464-residue chain is Septin homolog spn5 (464 aa).

The disordered stretch occupies residues 28–91 (QVDESSAKRS…VPNSNGKSIP (64 aa)). Basic and acidic residues-rich tracts occupy residues 41–54 (ESRKSKDVTRKEQI) and 69–81 (TAKDKKTEFKQDE). Residues 115–370 (NGIDINLIVV…DTFRTEKLVA (256 aa)) form the Septin-type G domain. Positions 125–132 (GESSLGKT) are G1 motif. GTP contacts are provided by residues 125-132 (GESSLGKT), threonine 151, glycine 177, 257-265 (KADTMTSDE), glycine 304, and arginine 319. The tract at residues 174-177 (DTPG) is G3 motif. The segment at 256 to 259 (GKAD) is G4 motif. The stretch at 396–453 (LVEEALTKVMKEKYREKENNLELLETNLKTHHKDYKHALKKRITALEEEKNRLIKEIG) forms a coiled coil.

This sequence belongs to the TRAFAC class TrmE-Era-EngA-EngB-Septin-like GTPase superfamily. Septin GTPase family. In terms of assembly, component of the sporulation-specific septin complex composed of at least spn2, spn5, spn6 and spn7.

It localises to the nucleus. It is found in the forespore membrane. Its function is as follows. Septin-like protein involved in the correct orientation of forespore membrane extension during sporulation. In Schizosaccharomyces pombe (strain 972 / ATCC 24843) (Fission yeast), this protein is Septin homolog spn5 (spn5).